Reading from the N-terminus, the 250-residue chain is 5'-nucleotidase SurE (250 aa).

A divalent metal cation contacts are provided by aspartate 9, aspartate 10, serine 40, and asparagine 92.

Belongs to the SurE nucleotidase family. A divalent metal cation serves as cofactor.

It localises to the cytoplasm. It catalyses the reaction a ribonucleoside 5'-phosphate + H2O = a ribonucleoside + phosphate. Nucleotidase that shows phosphatase activity on nucleoside 5'-monophosphates. The protein is 5'-nucleotidase SurE of Idiomarina loihiensis (strain ATCC BAA-735 / DSM 15497 / L2-TR).